The primary structure comprises 386 residues: MEKIEEQFANLNIVKRSSETKEPTYLLGIDTSKTVQTEKGSLVAVLCSNGSIRIHDKERLNVIREFRGYPGLNGVKFANSHDSVYSSCTDGTVKCWDARLASGKPVQLFKGYPSNIFISFDISSNDHVICAGTEKVDDDALLVFWDARINSQDLSTTKEPLGAYSETHSDDITQVRFHPSNPNMVVSGSTDGLVNVFDISADNEDDALVTTCNSVSSVSFIGWSGKDYKQIYCMTHDEGFCWWDLNHLDTDEPITCLNVPDVREVINVKEGILDYLIGGLYHEKTDKLFVVGGTNTGIIRIMNCMTSGLVHVTSLQGGHAATVRSFCWNMQDDSLLTGGEDAQLLLWKPGAVEKTFTKKDSMKIASSVHQRVRVHSNDSYKRRKKQ.

6 WD repeats span residues Lys-21–Glu-65, Gly-68–Val-106, Gly-111–Ser-155, Thr-167–Ala-207, Asn-213–Pro-253, and Gly-318–Thr-357.

This Bos taurus (Bovine) protein is WD repeat-containing protein 89 (WDR89).